Consider the following 185-residue polypeptide: uncharacterized protein (185 aa).

This is an uncharacterized protein from Trypanosoma brucei brucei.